Here is a 327-residue protein sequence, read N- to C-terminus: rRNA 2'-O-methyltransferase fibrillarin (327 aa).

The tract at residues 1–95 is disordered; it reads MKPGFSPRGG…NQSGKNVMVE (95 aa). Gly residues predominate over residues 7–80; that stretch reads PRGGGFGGRG…GGNRGRGGGR (74 aa). Asymmetric dimethylarginine is present on residues Arg-8, Arg-15, Arg-21, Arg-24, Arg-28, and Arg-31. Residues Lys-90, Lys-108, and Lys-115 each participate in a glycyl lysine isopeptide (Lys-Gly) (interchain with G-Cter in SUMO2) cross-link. Lys-108 bears the N6-acetyllysine mark. The residue at position 122 (Ser-122) is a Phosphoserine. The residue at position 127 (Lys-127) is an N6-acetyllysine. Residues Ser-130 and Ser-132 each carry the phosphoserine modification. Glycyl lysine isopeptide (Lys-Gly) (interchain with G-Cter in SUMO2) cross-links involve residues Lys-137, Lys-149, and Lys-164. Residues 178 to 179 and 197 to 198 contribute to the S-adenosyl-L-methionine site; these read TT and EF. 2 positions are modified to N6-acetyllysine: Lys-211 and Lys-212. Residues 222 to 223 and 242 to 245 contribute to the S-adenosyl-L-methionine site; these read DA and DVAQ.

Belongs to the methyltransferase superfamily. Fibrillarin family. Component of box C/D small nucleolar ribonucleoprotein (snoRNP) particles that contain SNU13, FBL, NOP5 and NOP56, plus a guide RNA. It is associated with the U3, U8, U13, X and Y small nuclear RNAs. Component of several ribosomal and nucleolar protein complexes. Part of the small subunit (SSU) processome, composed of more than 70 proteins and the RNA chaperone small nucleolar RNA (snoRNA) U3. Interacts with PRMT5 and UTP20. Interacts with DDX5 and C1QBP. Interacts with NOL11. Interacts with PIH1D1. Interacts with RRP1B. Interacts with NOLC1. Interacts with SDE2. Interacts with NOP2 and NOP56. Post-translationally, by homology to other fibrillarins, some or all of the N-terminal domain arginines are modified to asymmetric dimethylarginine (DMA). Ubiquitinated. Ubiquitination leads to proteasomal degradation. Deubiquitinated by USP36. In terms of processing, acetylated by CREBBP/CBP, preventing methylation of 'Gln-105' of histone H2A (H2AQ104me), without affecting rRNA methylation. Deacetylation by SIRT7 restores methylation of 'Gln-105' of histone H2A (H2AQ104me).

It is found in the nucleus. Its subcellular location is the nucleolus. The protein resides in the nucleoplasm. It catalyses the reaction L-glutaminyl-[histone H2A] + S-adenosyl-L-methionine = N(5)-methyl-L-glutaminyl-[histone H2A] + S-adenosyl-L-homocysteine + H(+). It carries out the reaction a ribonucleotide in rRNA + S-adenosyl-L-methionine = a 2'-O-methylribonucleotide in rRNA + S-adenosyl-L-homocysteine + H(+). The catalysed reaction is a ribonucleotide in U6 snRNA + S-adenosyl-L-methionine = a 2'-O-methylribonucleotide in U6 snRNA + S-adenosyl-L-homocysteine + H(+). Its function is as follows. S-adenosyl-L-methionine-dependent methyltransferase that has the ability to methylate both RNAs and proteins. Involved in pre-rRNA processing by catalyzing the site-specific 2'-hydroxyl methylation of ribose moieties in pre-ribosomal RNA. Site specificity is provided by a guide RNA that base pairs with the substrate. Methylation occurs at a characteristic distance from the sequence involved in base pairing with the guide RNA. Probably catalyzes 2'-O-methylation of U6 snRNAs in box C/D RNP complexes. U6 snRNA 2'-O-methylation is required for mRNA splicing fidelity. Also acts as a protein methyltransferase by mediating methylation of 'Gln-105' of histone H2A (H2AQ104me), a modification that impairs binding of the FACT complex and is specifically present at 35S ribosomal DNA locus. Part of the small subunit (SSU) processome, first precursor of the small eukaryotic ribosomal subunit. During the assembly of the SSU processome in the nucleolus, many ribosome biogenesis factors, an RNA chaperone and ribosomal proteins associate with the nascent pre-rRNA and work in concert to generate RNA folding, modifications, rearrangements and cleavage as well as targeted degradation of pre-ribosomal RNA by the RNA exosome. This chain is rRNA 2'-O-methyltransferase fibrillarin, found in Mus musculus (Mouse).